The chain runs to 109 residues: Large ribosomal subunit protein uL22 (109 aa).

The protein belongs to the universal ribosomal protein uL22 family. As to quaternary structure, part of the 50S ribosomal subunit.

Functionally, this protein binds specifically to 23S rRNA; its binding is stimulated by other ribosomal proteins, e.g. L4, L17, and L20. It is important during the early stages of 50S assembly. It makes multiple contacts with different domains of the 23S rRNA in the assembled 50S subunit and ribosome. The globular domain of the protein is located near the polypeptide exit tunnel on the outside of the subunit, while an extended beta-hairpin is found that lines the wall of the exit tunnel in the center of the 70S ribosome. In Polynucleobacter asymbioticus (strain DSM 18221 / CIP 109841 / QLW-P1DMWA-1) (Polynucleobacter necessarius subsp. asymbioticus), this protein is Large ribosomal subunit protein uL22.